A 419-amino-acid chain; its full sequence is Glutamyl-tRNA reductase (419 aa).

Substrate contacts are provided by residues 50 to 53 (TCNR), serine 108, 113 to 115 (ETQ), and glutamine 119. Cysteine 51 serves as the catalytic Nucleophile. 188–193 (GAGEMI) provides a ligand contact to NADP(+).

The protein belongs to the glutamyl-tRNA reductase family. Homodimer.

It carries out the reaction (S)-4-amino-5-oxopentanoate + tRNA(Glu) + NADP(+) = L-glutamyl-tRNA(Glu) + NADPH + H(+). It participates in porphyrin-containing compound metabolism; protoporphyrin-IX biosynthesis; 5-aminolevulinate from L-glutamyl-tRNA(Glu): step 1/2. In terms of biological role, catalyzes the NADPH-dependent reduction of glutamyl-tRNA(Glu) to glutamate 1-semialdehyde (GSA). The protein is Glutamyl-tRNA reductase of Albidiferax ferrireducens (strain ATCC BAA-621 / DSM 15236 / T118) (Rhodoferax ferrireducens).